The chain runs to 353 residues: 3'(2'),5'-bisphosphate nucleotidase (353 aa).

Asp-50 serves as the catalytic Proton acceptor. Mg(2+)-binding residues include Glu-73, Asp-136, Ile-138, and Asp-139. Thr-141 (proton acceptor) is an active-site residue. Adenosine 3',5'-bisphosphate contacts are provided by Thr-141, His-232, Ser-256, Lys-259, Arg-273, and Asp-286. AMP is bound by residues His-232, Ser-256, Lys-259, Arg-273, and Asp-286. Mg(2+) is bound at residue Asp-286.

It belongs to the inositol monophosphatase superfamily. Mg(2+) serves as cofactor.

The enzyme catalyses 3'-phosphoadenylyl sulfate + H2O = adenosine 5'-phosphosulfate + phosphate. The catalysed reaction is adenosine 3',5'-bisphosphate + H2O = AMP + phosphate. It carries out the reaction adenosine 2',5'-bisphosphate + H2O = AMP + phosphate. It catalyses the reaction 1D-myo-inositol 1,4-bisphosphate + H2O = 1D-myo-inositol 4-phosphate + phosphate. The enzyme catalyses 1D-myo-inositol 1,3,4-trisphosphate + H2O = 1D-myo-inositol 3,4-bisphosphate + phosphate. Its activity is regulated as follows. Inhibited by Li(+) and Na(+). In terms of biological role, phosphatase that converts adenosine 3'-phosphate 5'-phosphosulfate (PAPS) to adenosine 5'-phosphosulfate (APS) and 3'(2')-phosphoadenosine 5'-phosphate (PAP) to AMP. May regulate the flux of sulfur in the sulfur-activation pathway by converting PAPS to APS. Is also able to hydrolyze inositol 1,4-bisphosphate (Ins(1,4)P2) and inositol 1,3,4-trisphosphate (Ins(1,3,4)P3), but is not active on inositol 1,4,5-trisphosphate, inositol 1-phosphate, fructose 1,6-bisphosphate, AMP and ATP. Confers resistance to lithium. This is 3'(2'),5'-bisphosphate nucleotidase (tol1) from Schizosaccharomyces pombe (strain 972 / ATCC 24843) (Fission yeast).